We begin with the raw amino-acid sequence, 519 residues long: Probable cytosol aminopeptidase (519 aa).

Mn(2+)-binding residues include lysine 251 and aspartate 256. Lysine 263 is a catalytic residue. Aspartate 274, aspartate 333, and glutamate 335 together coordinate Mn(2+). Residue arginine 337 is part of the active site. Over residues 487 to 502 (VAPAAPAAPAAPAARP) the composition is skewed to low complexity. The tract at residues 487 to 519 (VAPAAPAAPAAPAARPAAKRTGRSQGGLKRTAP) is disordered.

This sequence belongs to the peptidase M17 family. It depends on Mn(2+) as a cofactor.

The protein resides in the cytoplasm. The enzyme catalyses Release of an N-terminal amino acid, Xaa-|-Yaa-, in which Xaa is preferably Leu, but may be other amino acids including Pro although not Arg or Lys, and Yaa may be Pro. Amino acid amides and methyl esters are also readily hydrolyzed, but rates on arylamides are exceedingly low.. It catalyses the reaction Release of an N-terminal amino acid, preferentially leucine, but not glutamic or aspartic acids.. Its function is as follows. Presumably involved in the processing and regular turnover of intracellular proteins. Catalyzes the removal of unsubstituted N-terminal amino acids from various peptides. The chain is Probable cytosol aminopeptidase from Verminephrobacter eiseniae (strain EF01-2).